The following is a 341-amino-acid chain: uncharacterized protein (341 aa).

This is an uncharacterized protein from Treponema pallidum (strain Nichols).